A 415-amino-acid chain; its full sequence is Sphingomyelin synthase-related protein 1 (415 aa).

Positions 12–78 constitute an SAM domain; that stretch reads WTTKHVAVWL…MLSVRKLQKI (67 aa). The next 4 helical transmembrane spans lie at 153 to 173, 201 to 221, 232 to 252, and 277 to 297; these read ILSC…MVIV, FAMT…VLLL, LCSL…VTSL, and FAIW…GDYM. Histidine 301 is an active-site residue. The chain crosses the membrane as a helical span at residues 322–342; the sequence is FLHTLSWVLNLFGIFFILAAH. Active-site residues include histidine 344 and aspartate 348. The chain crosses the membrane as a helical span at residues 347 to 367; that stretch reads IDVFIAFYITTRLFLYYHTLA. Residues 368–415 lie on the Cytoplasmic side of the membrane; it reads NTRAYQQSRRARIWFPMFSFFECNVNGTVPNEYCWPFSKPAIMKRLIG.

Belongs to the sphingomyelin synthase family.

It localises to the endoplasmic reticulum membrane. The catalysed reaction is an N-acylsphing-4-enine + a 1,2-diacyl-sn-glycero-3-phosphoethanolamine = an N-acylsphing-4-enine 1-phosphoethanolamine + a 1,2-diacyl-sn-glycerol. It catalyses the reaction an N-acylsphinganine + a 1,2-diacyl-sn-glycero-3-phosphoethanolamine = an N-acylsphinganine-1-phosphoethanolamine + a 1,2-diacyl-sn-glycerol. The enzyme catalyses an N-acyl-(4R)-4-hydroxysphinganine + a 1,2-diacyl-sn-glycero-3-phosphoethanolamine = an N-acyl-(4R)-4-hydroxysphinganine-1-phosphoethanolamine + a 1,2-diacyl-sn-glycerol. It carries out the reaction N-hexadecanoylsphinganine + a 1,2-diacyl-sn-glycero-3-phosphoethanolamine = N-hexadecanoyl-sphinganine-1-phosphoethanolamine + a 1,2-diacyl-sn-glycerol. The catalysed reaction is N-hexadecanoyl-(4R)-hydroxysphinganine + a 1,2-diacyl-sn-glycero-3-phosphoethanolamine = N-hexadecanoyl-(4R)-hydroxysphinganine-1-phosphoethanolamine + a 1,2-diacyl-sn-glycerol. Its pathway is sphingolipid metabolism. Its function is as follows. Synthesizes sphingolipids through transfer of a phosphatidyl head group from a glycerophospholipid on to the primary hydroxyl of a ceramide in the lumen of the endoplasmic reticulum. Catalyzes the synthesis of ceramide phosphoethanolamines (CPEs) (such as N-acylsphing-4-enine 1-phosphoethanolamine) by transferring phosphoethanolamine head group, which is smaller and more hydrophilic than the phosphocholine (PC) headgroup transferred in the canonical sphingomyelin synthesis (SMS) reaction by SMS1 or SMS2, from a phosphatidylethanolamine (1,2-diacyl-sn-glycero-3-phosphoethanolamine, PE) to a ceramide (such as N-acylsphing-4-enine). The larger PC prevents an efficient fit in the enzyme's catalytic pocket, leading to little or no SMS activity. In vitro, in the absence of ceramide, it has PLC activity with preference for phosphatidylinositol and phosphatidic acid, but also hydrolyzes phosphatidylethanolamine. This chain is Sphingomyelin synthase-related protein 1, found in Homo sapiens (Human).